A 479-amino-acid chain; its full sequence is Baeyer-Villiger monooxygenase AacuH (479 aa).

The interval aspartate 14 to arginine 34 is disordered.

This sequence belongs to the AflY oxidoreductase family.

The protein operates within secondary metabolite biosynthesis. Functionally, baeyer-Villiger monooxygenase; part of the gene cluster that mediates the biosynthesis of the tetrahydroxanthone dimer secalonic acid D. The pathway begins with the synthesis of atrochrysone thioester by the polyketide synthase AacuL. The atrochrysone carboxyl ACP thioesterase AacuM then breaks the thioester bond and releases the atrochrysone carboxylic acid from AacuL. Atrochrysone carboxylic acid is decarboxylated by the decarboxylase AacuI, and oxidized by the anthrone oxygenase AacuG to yield emodin. Emodin is then reduced to emodin hydroquinone by a yet unidentified oxidoreductase. A-ring reduction by the short chain dehydrogenase AacuN, dehydration by the scytalone dehydratase-like protein AacuK and probable spontaneous re-oxidation, results in overall deoxygenation to chrysophanol. Baeyer-Villiger oxidation by the Baeyer-Villiger monooxygenase (BVMO) AacuH then yields monodictyphenone. Monodictyphenone is transformed into compounds with the tetrahydroxanthone skeleton via methylesterification by the methyltransferase AacuQ, followed by the action of the flavin-dependent monooxygenase AacuC, the isomerase AacuP, and the short chain dehydrogenase/reductase AacuF or AacuD. AacuF and AacuD should accept the same compound as a substrate but perform the ketoreduction with a different stereoselectivity, thus yielding blennolides B and A, respectively. In the final step of the biosynthesis, the cytochrome P450 monooxygenase AacuE accepts blennolide B and/or blennolide A to conduct the dimerization reaction to furnish the tetrahydroxanthone dimers, secalonic acids D, B, and F. The sequence is that of Baeyer-Villiger monooxygenase AacuH from Aspergillus aculeatus (strain ATCC 16872 / CBS 172.66 / WB 5094).